Consider the following 377-residue polypeptide: Nitric oxide reductase FlRd-NAD(+) reductase (377 aa).

The protein belongs to the FAD-dependent oxidoreductase family. The cofactor is FAD.

The protein localises to the cytoplasm. It catalyses the reaction 2 reduced [nitric oxide reductase rubredoxin domain] + NAD(+) + H(+) = 2 oxidized [nitric oxide reductase rubredoxin domain] + NADH. Its pathway is nitrogen metabolism; nitric oxide reduction. Its function is as follows. One of at least two accessory proteins for anaerobic nitric oxide (NO) reductase. Reduces the rubredoxin moiety of NO reductase. The polypeptide is Nitric oxide reductase FlRd-NAD(+) reductase (Klebsiella pneumoniae (strain 342)).